A 387-amino-acid chain; its full sequence is Apoptosis-inducing factor homolog B (387 aa).

FAD contacts are provided by residues 12-16, R47, and D292; that span reads GGGYG.

It belongs to the FAD-dependent oxidoreductase family. It depends on FAD as a cofactor.

Putative FAD-dependent oxidoreductase. The sequence is that of Apoptosis-inducing factor homolog B (aifB) from Dictyostelium discoideum (Social amoeba).